Here is a 1010-residue protein sequence, read N- to C-terminus: Trifunctional purine biosynthetic protein adenosine-3 (1010 aa).

N-acetylalanine is present on Ala-2. The ATP-grasp domain occupies 111 to 318 (KEFMDRHGIS…LYEVIQSILD (208 aa)). ATP is bound by residues 190 to 193 (EELL), Glu-197, Arg-220, and Asn-229. Residues Glu-288 and Asn-290 each coordinate Mg(2+). Residue Lys-350 is modified to N6-acetyllysine. The tract at residues 434-809 (GLTYKESGVD…HFSVQPKKAR (376 aa)) is AIRS domain. Ser-440 bears the Phosphoserine mark. Residue Thr-682 is modified to Phosphothreonine. A Phosphoserine modification is found at Ser-802. The tract at residues 810 to 1010 (VAVLISGTGS…NGRICWVTED (201 aa)) is GART domain. 818 to 820 (GSN) is a binding site for N(1)-(5-phospho-beta-D-ribosyl)glycinamide. (6R)-10-formyltetrahydrofolate contacts are provided by residues Arg-871, 896–899 (MRIL), and Asn-913. Residue His-915 is the Proton donor of the active site. 947-951 (AEDVD) provides a ligand contact to (6R)-10-formyltetrahydrofolate. Residue 977–980 (KLAE) participates in N(1)-(5-phospho-beta-D-ribosyl)glycinamide binding.

The protein in the N-terminal section; belongs to the GARS family. It in the central section; belongs to the AIR synthase family. In the C-terminal section; belongs to the GART family. Homodimer. It depends on Mg(2+) as a cofactor. Mn(2+) serves as cofactor.

It catalyses the reaction 5-phospho-beta-D-ribosylamine + glycine + ATP = N(1)-(5-phospho-beta-D-ribosyl)glycinamide + ADP + phosphate + H(+). It carries out the reaction 2-formamido-N(1)-(5-O-phospho-beta-D-ribosyl)acetamidine + ATP = 5-amino-1-(5-phospho-beta-D-ribosyl)imidazole + ADP + phosphate + H(+). The enzyme catalyses N(1)-(5-phospho-beta-D-ribosyl)glycinamide + (6R)-10-formyltetrahydrofolate = N(2)-formyl-N(1)-(5-phospho-beta-D-ribosyl)glycinamide + (6S)-5,6,7,8-tetrahydrofolate + H(+). It participates in purine metabolism; IMP biosynthesis via de novo pathway; 5-amino-1-(5-phospho-D-ribosyl)imidazole from N(2)-formyl-N(1)-(5-phospho-D-ribosyl)glycinamide: step 2/2. It functions in the pathway purine metabolism; IMP biosynthesis via de novo pathway; N(1)-(5-phospho-D-ribosyl)glycinamide from 5-phospho-alpha-D-ribose 1-diphosphate: step 2/2. Its pathway is purine metabolism; IMP biosynthesis via de novo pathway; N(2)-formyl-N(1)-(5-phospho-D-ribosyl)glycinamide from N(1)-(5-phospho-D-ribosyl)glycinamide (10-formyl THF route): step 1/1. Functionally, trifunctional enzyme that catalyzes three distinct reactions as part of the 'de novo' inosine monophosphate biosynthetic pathway. In Bos taurus (Bovine), this protein is Trifunctional purine biosynthetic protein adenosine-3 (GART).